The chain runs to 450 residues: UDP-N-acetylmuramoylalanine--D-glutamate ligase (450 aa).

119–125 (GSNGKTT) lines the ATP pocket.

The protein belongs to the MurCDEF family.

The protein localises to the cytoplasm. The catalysed reaction is UDP-N-acetyl-alpha-D-muramoyl-L-alanine + D-glutamate + ATP = UDP-N-acetyl-alpha-D-muramoyl-L-alanyl-D-glutamate + ADP + phosphate + H(+). The protein operates within cell wall biogenesis; peptidoglycan biosynthesis. Its function is as follows. Cell wall formation. Catalyzes the addition of glutamate to the nucleotide precursor UDP-N-acetylmuramoyl-L-alanine (UMA). This chain is UDP-N-acetylmuramoylalanine--D-glutamate ligase, found in Streptococcus pneumoniae serotype 4 (strain ATCC BAA-334 / TIGR4).